The chain runs to 437 residues: GTPase Der (437 aa).

EngA-type G domains are found at residues 3 to 167 (ALVA…PAEN) and 177 to 353 (PRIA…AHRS). GTP-binding positions include 9–16 (GRPNVGKS), 56–60 (DTGGW), 119–122 (NKVD), 183–190 (GRPNAGKS), 230–234 (DTAGI), and 295–298 (NKWD). In terms of domain architecture, KH-like spans 354–437 (TRIPTHKLNE…TPINIFIREK (84 aa)).

The protein belongs to the TRAFAC class TrmE-Era-EngA-EngB-Septin-like GTPase superfamily. EngA (Der) GTPase family. As to quaternary structure, associates with the 50S ribosomal subunit.

In terms of biological role, GTPase that plays an essential role in the late steps of ribosome biogenesis. This Porphyromonas gingivalis (strain ATCC BAA-308 / W83) protein is GTPase Der.